The primary structure comprises 150 residues: Cyanate hydratase (150 aa).

Residues R91, E94, and S117 contribute to the active site.

Belongs to the cyanase family.

The enzyme catalyses cyanate + hydrogencarbonate + 3 H(+) = NH4(+) + 2 CO2. In terms of biological role, catalyzes the reaction of cyanate with bicarbonate to produce ammonia and carbon dioxide. The sequence is that of Cyanate hydratase from Synechococcus sp. (strain CC9311).